Consider the following 143-residue polypeptide: D-aminoacyl-tRNA deacylase (143 aa).

Residues 135 to 136 (GP) carry the Gly-cisPro motif, important for rejection of L-amino acids motif.

This sequence belongs to the DTD family. As to quaternary structure, homodimer.

The protein localises to the cytoplasm. It catalyses the reaction glycyl-tRNA(Ala) + H2O = tRNA(Ala) + glycine + H(+). The catalysed reaction is a D-aminoacyl-tRNA + H2O = a tRNA + a D-alpha-amino acid + H(+). Its function is as follows. An aminoacyl-tRNA editing enzyme that deacylates mischarged D-aminoacyl-tRNAs. Also deacylates mischarged glycyl-tRNA(Ala), protecting cells against glycine mischarging by AlaRS. Acts via tRNA-based rather than protein-based catalysis; rejects L-amino acids rather than detecting D-amino acids in the active site. By recycling D-aminoacyl-tRNA to D-amino acids and free tRNA molecules, this enzyme counteracts the toxicity associated with the formation of D-aminoacyl-tRNA entities in vivo and helps enforce protein L-homochirality. This Mycobacterium avium (strain 104) protein is D-aminoacyl-tRNA deacylase.